A 159-amino-acid polypeptide reads, in one-letter code: 2-C-methyl-D-erythritol 2,4-cyclodiphosphate synthase (159 aa).

Residues D8 and H10 each coordinate a divalent metal cation. 4-CDP-2-C-methyl-D-erythritol 2-phosphate is bound by residues D8–H10 and H34–S35. H42 serves as a coordination point for a divalent metal cation. Residues D56 to G58, F61 to D65, F139, and R142 contribute to the 4-CDP-2-C-methyl-D-erythritol 2-phosphate site.

This sequence belongs to the IspF family. As to quaternary structure, homotrimer. Requires a divalent metal cation as cofactor.

The enzyme catalyses 4-CDP-2-C-methyl-D-erythritol 2-phosphate = 2-C-methyl-D-erythritol 2,4-cyclic diphosphate + CMP. The protein operates within isoprenoid biosynthesis; isopentenyl diphosphate biosynthesis via DXP pathway; isopentenyl diphosphate from 1-deoxy-D-xylulose 5-phosphate: step 4/6. Its function is as follows. Involved in the biosynthesis of isopentenyl diphosphate (IPP) and dimethylallyl diphosphate (DMAPP), two major building blocks of isoprenoid compounds. Catalyzes the conversion of 4-diphosphocytidyl-2-C-methyl-D-erythritol 2-phosphate (CDP-ME2P) to 2-C-methyl-D-erythritol 2,4-cyclodiphosphate (ME-CPP) with a corresponding release of cytidine 5-monophosphate (CMP). The polypeptide is 2-C-methyl-D-erythritol 2,4-cyclodiphosphate synthase (Syntrophus aciditrophicus (strain SB)).